A 347-amino-acid polypeptide reads, in one-letter code: Eukaryotic translation initiation factor 3 subunit H (347 aa).

The MPN domain maps to 1-142; the sequence is MKIMKHCSQT…LRAFRLSPRF (142 aa).

Belongs to the eIF-3 subunit H family. Component of the eukaryotic translation initiation factor 3 (eIF-3) complex.

The protein resides in the cytoplasm. In terms of biological role, component of the eukaryotic translation initiation factor 3 (eIF-3) complex, which is involved in protein synthesis of a specialized repertoire of mRNAs and, together with other initiation factors, stimulates binding of mRNA and methionyl-tRNAi to the 40S ribosome. The eIF-3 complex specifically targets and initiates translation of a subset of mRNAs involved in cell proliferation. This is Eukaryotic translation initiation factor 3 subunit H from Neosartorya fischeri (strain ATCC 1020 / DSM 3700 / CBS 544.65 / FGSC A1164 / JCM 1740 / NRRL 181 / WB 181) (Aspergillus fischerianus).